A 395-amino-acid chain; its full sequence is Phosphopentomutase (395 aa).

6 residues coordinate Mn(2+): D14, D289, H294, D330, H331, and H342.

Belongs to the phosphopentomutase family. Requires Mn(2+) as cofactor.

The protein resides in the cytoplasm. It catalyses the reaction 2-deoxy-alpha-D-ribose 1-phosphate = 2-deoxy-D-ribose 5-phosphate. The catalysed reaction is alpha-D-ribose 1-phosphate = D-ribose 5-phosphate. Its pathway is carbohydrate degradation; 2-deoxy-D-ribose 1-phosphate degradation; D-glyceraldehyde 3-phosphate and acetaldehyde from 2-deoxy-alpha-D-ribose 1-phosphate: step 1/2. Isomerase that catalyzes the conversion of deoxy-ribose 1-phosphate (dRib-1-P) and ribose 1-phosphate (Rib-1-P) to deoxy-ribose 5-phosphate (dRib-5-P) and ribose 5-phosphate (Rib-5-P), respectively. The chain is Phosphopentomutase from Mycoplasmopsis pulmonis (strain UAB CTIP) (Mycoplasma pulmonis).